The primary structure comprises 344 residues: tRNA N6-adenosine threonylcarbamoyltransferase (344 aa).

Fe cation is bound by residues His-114 and His-118. Substrate-binding positions include Leu-136–Gly-140, Asp-170, Gly-183, Asp-187, and Asn-278. Asp-306 serves as a coordination point for Fe cation. A disordered region spans residues Pro-325–Arg-344.

This sequence belongs to the KAE1 / TsaD family. It depends on Fe(2+) as a cofactor.

The protein resides in the cytoplasm. It catalyses the reaction L-threonylcarbamoyladenylate + adenosine(37) in tRNA = N(6)-L-threonylcarbamoyladenosine(37) in tRNA + AMP + H(+). Its function is as follows. Required for the formation of a threonylcarbamoyl group on adenosine at position 37 (t(6)A37) in tRNAs that read codons beginning with adenine. Is involved in the transfer of the threonylcarbamoyl moiety of threonylcarbamoyl-AMP (TC-AMP) to the N6 group of A37, together with TsaE and TsaB. TsaD likely plays a direct catalytic role in this reaction. The protein is tRNA N6-adenosine threonylcarbamoyltransferase of Mycobacterium tuberculosis (strain ATCC 25177 / H37Ra).